We begin with the raw amino-acid sequence, 447 residues long: Neuronal acetylcholine receptor subunit alpha-10 (447 aa).

Positions 1–24 (MGTRSHYLDLGFLLLLFLPAECLG) are cleaved as a signal peptide. The Extracellular portion of the chain corresponds to 25–237 (AEGRLAHKLF…FTLLLRRRAA (213 aa)). 2 N-linked (GlcNAc...) asparagine glycosylation sites follow: Asn-40 and Asn-56. Disulfide bonds link Cys-154–Cys-168 and Cys-218–Cys-219. 3 consecutive transmembrane segments (helical) span residues 238-258 (AYVC…PLAF), 268-288 (VSLG…LAES), and 302-322 (YMAT…IMNL). The Cytoplasmic segment spans residues 323–425 (HYCGPNAHPV…WKRLARVMDR (103 aa)). A helical transmembrane segment spans residues 426-446 (FFLGIFFCMALVMSLIVLVQA).

The protein belongs to the ligand-gated ion channel (TC 1.A.9) family. Acetylcholine receptor (TC 1.A.9.1) subfamily. Alpha-10/CHRNA10 sub-subfamily. In terms of assembly, forms homo- or heterooligomeric channels in conjunction with CHRNA10. The native outer hair cell receptor may be composed of CHRNA9:CHRNA10 heterooligomers. Found in the stoichiometric form (CHRNA9)2:(CHRNA10)3. In terms of tissue distribution, expressed in the outer hair cells of the cochlea and the neurons of dorsal root ganglia.

The protein localises to the synaptic cell membrane. The protein resides in the cell membrane. It carries out the reaction Ca(2+)(in) = Ca(2+)(out). The catalysed reaction is Mg(2+)(in) = Mg(2+)(out). The enzyme catalyses K(+)(in) = K(+)(out). It catalyses the reaction Na(+)(in) = Na(+)(out). Its activity is regulated as follows. Activated by a myriad of ligands such as acetylcholine. AChR activity is inhibited by the antagonist alpha-conotoxins RgIA and GeXXA, small disulfide-constrained peptides from cone snails. Component of neuronal acetylcholine receptors (nAChRs) that function as pentameric, ligand-gated cation channels with high calcium permeability among other activities. nAChRs are excitatory neurotrasnmitter receptors formed by a collection of nAChR subunits known to mediate synaptic transmission in the nervous system and the neuromuscular junction. Each nAchR subunit confers differential attributes to channel properties, including activation, deactivation and desensitization kinetics, pH sensitivity, cation permeability, and binding to allosteric modulators. Forms heteropentamers with CHRNA9. Expressed in the inner ear, in sympathetic neurons and in other non-neuronal cells, such as skin keratinocytes and lymphocytes. nAChR formed by CHRNA9:CHRNA10 mediate central nervous system control of auditory and vestibular sensory processing. The channel is permeable to a range of divalent cations including calcium, the influx of which may activate a potassium current which hyperpolarizes the cell membrane. In the ear, mediates synaptic transmission between efferent olivocochlear fibers and hair cells of the cochlea, this may lead to a reduction in basilar membrane motion, altering the activity of auditory nerve fibers and reducing the range of dynamic hearing. This may protect against acoustic trauma. May also regulate keratinocyte adhesion. This chain is Neuronal acetylcholine receptor subunit alpha-10 (Chrna10), found in Rattus norvegicus (Rat).